A 264-amino-acid polypeptide reads, in one-letter code: Signal peptidase I (264 aa).

Topologically, residues 1-18 (MNRDNINSNKTVKQEFGS) are cytoplasmic. A helical transmembrane segment spans residues 19–39 (FAFVICIALVIRILIMEPFTV). The Extracellular portion of the chain corresponds to 40–264 (PTGSMKATIL…IFKNLYNVDE (225 aa)). Catalysis depends on residues Ser43 and Lys106.

It belongs to the peptidase S26 family.

Its subcellular location is the cell membrane. It catalyses the reaction Cleavage of hydrophobic, N-terminal signal or leader sequences from secreted and periplasmic proteins.. This Rickettsia prowazekii (strain Madrid E) protein is Signal peptidase I (lepB).